The primary structure comprises 525 residues: MKLSALHQSYLNRRSNSFRSPTSLDSSVDGSGKSLIAVFWLILHCLCCLISLVLGFRFSRLVFFFLFSTSSTNLYSLPFRPDLPVKHLDVHTIGRTLDPGANGTTVVATATKSSRVVVGRHGIRIRPWPHPNPVEVMKAHQIIGRVQKEQKMIFGMKSSKMVIAVTPTYVRTFQALHLTGVMHSLMLVPYDLVWIVVEAGGATNETGLIIAKSGLRTIHVGIDQRMPNTWEDRSKLEVFMRLQALRVVREEKLDGIVMFADDSNMHSMELFDEIQNVKWFGTVSVGILAHSGNAEEMVLSMEKRKEMEKEEEEESSSLPVQGPACNSTDQLIGWHIFNTLPYAGKSAVYIDDVAAVLPQKLEWSGFVLNSRLLWEEAENKPEWVKDFGSLNENEGVESPLSLLKDPSMVEPLGSCGRQVLLWWLRVEARADSKFPPGWIIDPPLEITVAAKRTPWPDVPPEPPTKKKDQMPLSQGNTVVVIPKQQQHPTKIRKPKRKSKKSKHEPRPTDTTTQVYSSSSKHQERN.

At 1-35 (MKLSALHQSYLNRRSNSFRSPTSLDSSVDGSGKSL) the chain is on the cytoplasmic side. The chain crosses the membrane as a helical; Signal-anchor for type II membrane protein span at residues 36-56 (IAVFWLILHCLCCLISLVLGF). The Lumenal portion of the chain corresponds to 57–525 (RFSRLVFFFL…SSSSKHQERN (469 aa)). N-linked (GlcNAc...) asparagine glycans are attached at residues asparagine 102, asparagine 204, and asparagine 326. Residues 452-525 (RTPWPDVPPE…SSSSKHQERN (74 aa)) form a disordered region. Residues 471 to 488 (PLSQGNTVVVIPKQQQHP) are compositionally biased toward polar residues. Basic residues predominate over residues 489 to 503 (TKIRKPKRKSKKSKH). Over residues 508–519 (TDTTTQVYSSSS) the composition is skewed to polar residues.

This sequence belongs to the glycosyltransferase 43 family. In terms of tissue distribution, expressed in developing interfascicular fibers and xylem cells in stems and developing secondary xylem in roots.

Its subcellular location is the golgi apparatus membrane. It catalyses the reaction [(1-&gt;4)-beta-D-xylan](n) + UDP-alpha-D-xylose = [(1-&gt;4)-beta-D-xylan](n+1) + UDP + H(+). Functionally, involved in the synthesis of the hemicellulose glucuronoxylan, a major component of secondary cell walls. Involved in the elongation of glucuronoxylan xylosyl backbone. Xylan xylosyltransferase that acts cooperatively with IRX9 to achieve the successive addition of xylosyl residues during xylan backbone elongation. Required for the proper composition and structural properties of released seed coat mucilage. Required for the production of highly branched xylan polymers in seed coat mucilage. Xylan with xylose side chains seems to be necessary for pectin attachment to the seed surface. Together with MUCI70, required for xylan and pectin synthesis in seed coat epidermal (SCE) cells. The chain is Beta-1,4-xylosyltransferase IRX14 from Arabidopsis thaliana (Mouse-ear cress).